The chain runs to 255 residues: Staphylococcal secretory antigen ssaA1 (255 aa).

The signal sequence occupies residues 1–26 (MKKIVTATIATAGLATIAFAGHDAQA). 3 consecutive repeat copies span residues 75 to 78 (YNNY), 88 to 91 (YNNY), and 98 to 101 (YNNY). Residues 75-101 (YNNYNTYSYNNASYNNYYNHSYQYNNY) are 3 X 4 AA repeats of Y-N-N-Y. Residues 134–255 (AAPSSNGRSI…NQAGSYNFIH (122 aa)) enclose the Peptidase C51 domain.

The protein resides in the secreted. Not known; immunogenic protein. The chain is Staphylococcal secretory antigen ssaA1 (ssaA1) from Staphylococcus aureus (strain MW2).